The primary structure comprises 259 residues: DNA-directed RNA polymerase 30 kDa polypeptide (259 aa).

The TFIIS-type zinc finger occupies 155 to 195 (YNTPCPNCKSRNTTPMMIQTRAADEPPLVRHACRDCKQHFK). Zn(2+) contacts are provided by C159, C162, C187, and C190. The segment at 220-259 (EILPDNNPSPPESPEPASPIDDGLIRATFDRNDEPPEDDE) is disordered. Over residues 226–236 (NPSPPESPEPA) the composition is skewed to pro residues.

It belongs to the poxviridae DNA-directed RNA polymerase 30 kDa subunit family. The DNA-dependent RNA polymerase (vRNAP) consists of eight subunits encoded by early viral genes and termed according to their apparent molecular masses Rpo147, Rpo132, Rpo35, Rpo30, Rpo22, Rpo19, Rpo18, and Rpo7. The same holoenzyme, with the addition of the transcription-specificity factor RAP94, is used for early gene expression.

Its subcellular location is the virion. It is found in the host cytoplasm. The enzyme catalyses RNA(n) + a ribonucleoside 5'-triphosphate = RNA(n+1) + diphosphate. Its function is as follows. Part of the DNA-dependent RNA polymerase which catalyzes the transcription of viral DNA into RNA using the four ribonucleoside triphosphates as substrates. Responsible for the transcription of early, intermediate and late genes. DNA-dependent RNA polymerase associates with the early transcription factor (ETF), itself composed of OPG118 and OPG134, thereby allowing the early genes transcription. Late transcription, and probably also intermediate transcription, require newly synthesized RNA polymerase. The sequence is that of DNA-directed RNA polymerase 30 kDa polypeptide (OPG066) from Monkeypox virus.